A 298-amino-acid chain; its full sequence is GTP cyclohydrolase FolE2 (298 aa).

This sequence belongs to the GTP cyclohydrolase IV family.

The catalysed reaction is GTP + H2O = 7,8-dihydroneopterin 3'-triphosphate + formate + H(+). It participates in cofactor biosynthesis; 7,8-dihydroneopterin triphosphate biosynthesis; 7,8-dihydroneopterin triphosphate from GTP: step 1/1. Functionally, converts GTP to 7,8-dihydroneopterin triphosphate. This chain is GTP cyclohydrolase FolE2, found in Xylella fastidiosa (strain M23).